The primary structure comprises 559 residues: Glutamine--tRNA ligase (559 aa).

The 'HIGH' region signature appears at 44–54 (PEPNGYLHIGH). Residues 45-47 (EPN) and 51-57 (HIGHAKS) contribute to the ATP site. L-glutamine-binding residues include Asp-77 and Tyr-222. ATP is bound by residues Thr-241 and 272–273 (RL). The 'KMSKS' region motif lies at 279 to 283 (LTSKR).

Belongs to the class-I aminoacyl-tRNA synthetase family. In terms of assembly, monomer.

The protein resides in the cytoplasm. It catalyses the reaction tRNA(Gln) + L-glutamine + ATP = L-glutaminyl-tRNA(Gln) + AMP + diphosphate. The polypeptide is Glutamine--tRNA ligase (Actinobacillus succinogenes (strain ATCC 55618 / DSM 22257 / CCUG 43843 / 130Z)).